We begin with the raw amino-acid sequence, 310 residues long: Malate dehydrogenase (310 aa).

NAD(+) contacts are provided by residues glycine 7–glycine 13 and aspartate 34. 2 residues coordinate substrate: arginine 81 and arginine 87. Residues asparagine 94 and isoleucine 117–asparagine 119 each bind NAD(+). Residues asparagine 119 and arginine 153 each contribute to the substrate site. Histidine 177 functions as the Proton acceptor in the catalytic mechanism. Methionine 227 is an NAD(+) binding site.

The protein belongs to the LDH/MDH superfamily. MDH type 1 family. In terms of assembly, homodimer.

The catalysed reaction is (S)-malate + NAD(+) = oxaloacetate + NADH + H(+). In terms of biological role, catalyzes the reversible oxidation of malate to oxaloacetate. The protein is Malate dehydrogenase of Vibrio vulnificus (strain YJ016).